The primary structure comprises 302 residues: Zygote arrest protein 2.S (302 aa).

Disordered regions lie at residues 15 to 46, 88 to 117, and 138 to 195; these read YGGN…SEPP, VDTG…PTDC, and LPQG…EPNK. Residues 159-178 show a composition bias toward basic and acidic residues; the sequence is LKDRGPSPEEKEPETKEALE. Residues 203–288 form a 3CxxC-type zinc finger; sequence QKYGYFHCKD…QELCGRCKNK (86 aa).

It belongs to the ZAR1 family. As to expression, oocyte-specific.

The protein localises to the cytoplasm. The protein resides in the cytoplasmic ribonucleoprotein granule. MRNA-binding protein required for maternal mRNA storage, translation and degradation during oocyte maturation. Probably promotes formation of some phase-separated membraneless compartment that stores maternal mRNAs in oocytes: acts by undergoing liquid-liquid phase separation upon binding to maternal mRNAs. Binds to the 3'-UTR of maternal mRNAs, inhibiting their translation. The chain is Zygote arrest protein 2.S from Xenopus laevis (African clawed frog).